The primary structure comprises 496 residues: UDP-glycosyltransferase 73C2 (496 aa).

Residues Ser-297, Ser-357–Gln-359, His-374–Glu-382, and Phe-396–Gln-399 contribute to the UDP-alpha-D-glucose site.

Belongs to the UDP-glycosyltransferase family.

The protein is UDP-glycosyltransferase 73C2 (UGT73C2) of Arabidopsis thaliana (Mouse-ear cress).